We begin with the raw amino-acid sequence, 961 residues long: Exportin-T (961 aa).

It belongs to the exportin family.

It is found in the cytoplasm. Its subcellular location is the nucleus. Functionally, mediates the nuclear export of aminoacylated tRNAs. In Danio rerio (Zebrafish), this protein is Exportin-T (xpot).